Here is a 262-residue protein sequence, read N- to C-terminus: Tryptophan synthase alpha chain (262 aa).

Active-site proton acceptor residues include E49 and D60.

The protein belongs to the TrpA family. As to quaternary structure, tetramer of two alpha and two beta chains.

It catalyses the reaction (1S,2R)-1-C-(indol-3-yl)glycerol 3-phosphate + L-serine = D-glyceraldehyde 3-phosphate + L-tryptophan + H2O. The protein operates within amino-acid biosynthesis; L-tryptophan biosynthesis; L-tryptophan from chorismate: step 5/5. The alpha subunit is responsible for the aldol cleavage of indoleglycerol phosphate to indole and glyceraldehyde 3-phosphate. The protein is Tryptophan synthase alpha chain of Thermoanaerobacter sp. (strain X514).